A 64-amino-acid polypeptide reads, in one-letter code: Large ribosomal subunit protein bL35 (64 aa).

The interval 20-42 is disordered; the sequence is GRVKREKMYGSHNLEKKNRKRTR. The span at 25–35 shows a compositional bias: basic and acidic residues; that stretch reads EKMYGSHNLEK.

The protein belongs to the bacterial ribosomal protein bL35 family.

The chain is Large ribosomal subunit protein bL35 from Chlorobium phaeobacteroides (strain BS1).